We begin with the raw amino-acid sequence, 238 residues long: Uridylate kinase (238 aa).

12–15 (KLSG) lines the ATP pocket. Position 54 (G54) interacts with UMP. Residues G55 and R59 each coordinate ATP. UMP contacts are provided by residues D74 and 135–142 (TGNPYFTT). T162, N163, Y168, and D171 together coordinate ATP.

This sequence belongs to the UMP kinase family. In terms of assembly, homohexamer.

It is found in the cytoplasm. It catalyses the reaction UMP + ATP = UDP + ADP. It functions in the pathway pyrimidine metabolism; CTP biosynthesis via de novo pathway; UDP from UMP (UMPK route): step 1/1. Its activity is regulated as follows. Inhibited by UTP. Catalyzes the reversible phosphorylation of UMP to UDP. The polypeptide is Uridylate kinase (Nitrobacter winogradskyi (strain ATCC 25391 / DSM 10237 / CIP 104748 / NCIMB 11846 / Nb-255)).